The chain runs to 110 residues: UPF0339 protein YegP (110 aa).

Tandem repeats lie at residues 10-58 and 61-109.

The protein belongs to the UPF0339 family. Duplicated subfamily.

The protein is UPF0339 protein YegP (yegP) of Escherichia coli O6:H1 (strain CFT073 / ATCC 700928 / UPEC).